The chain runs to 398 residues: Inner membrane protein YjgN (398 aa).

Over 1–24 (MAQVINEMDVPSHSFVFHGTGERY) the chain is Cytoplasmic. A helical transmembrane segment spans residues 25–45 (FLICVVNVLLTIITLGIYLPW). Residues 46 to 73 (ALMKCKRYLYANMEVNGQRFSYGITGGN) are Periplasmic-facing. The helical transmembrane segment at 74-94 (VFVSCLFFVFFYFAILMTVSA) threads the bilayer. Asp-95 is a topological domain (cytoplasmic). Residues 96–116 (MPLVGCVLTLLLLVLLIFMAA) traverse the membrane as a helical segment. Topologically, residues 117–142 (KGLRHQALMTSLNGVRFSFNCSMKGF) are periplasmic. A helical transmembrane segment spans residues 143–163 (WWVTFFLPILMAIGMGTVFFI). Residues 164 to 175 (STKMLPANSSSS) are Cytoplasmic-facing. Residues 176–196 (VIISMVLMAIVGIVSIGIFNG) form a helical membrane-spanning segment. Over 197–228 (TLYSLVMSFLWSNTSFGIHRFKVKLDTTYCIK) the chain is Periplasmic. A helical membrane pass occupies residues 229–249 (YAILAFLALLPFLAVAGYIIF). Residues 250 to 278 (DQILNAYDSSVYANDDIENLQQFMEMQRK) are Cytoplasmic-facing. A helical membrane pass occupies residues 279-299 (MIIAQLIYYFGIAVSTSYLTV). The Periplasmic segment spans residues 300–333 (SLRNHFMSNLSLNDGRIRFRLTLTYHGMLYRMCA). A helical transmembrane segment spans residues 334–354 (LVVISGITGGLAYPLLKIWMI). Over 355–398 (DWQAKNTYLLGDLDDLPLINKEEQPDKGFLASISRGVMPSLPFL) the chain is Cytoplasmic.

It localises to the cell inner membrane. This Escherichia coli (strain K12) protein is Inner membrane protein YjgN (yjgN).